A 443-amino-acid polypeptide reads, in one-letter code: uncharacterized protein (443 aa).

Residues histidine 164 and aspartate 386 each act as proton acceptor in the active site.

Belongs to the plant acyltransferase family.

This is an uncharacterized protein from Arabidopsis thaliana (Mouse-ear cress).